The chain runs to 849 residues: Serrate RNA effector molecule homolog A (849 aa).

Disordered stretches follow at residues 1–90 and 276–409; these read MADS…HGSD and KREA…PRPL. 3 stretches are compositionally biased toward basic and acidic residues: residues 8-73, 276-306, and 314-342; these read YDRR…RHDL, KREAAKKEEAPVTETEKVVTEEKEAPAKPEN, and EKPVKPQEEEEKKVEKKVEKEEPERETRK. The segment covering 354-364 has biased composition (acidic residues); the sequence is SDDGSDSESDT. The span at 381 to 405 shows a compositional bias: basic and acidic residues; sequence RAEETPKKEEDTEKQKEKQKEDTVK.

It belongs to the ARS2 family. As to quaternary structure, interacts ncbp1/cbp80.

The protein resides in the nucleus. It localises to the nucleoplasm. The protein localises to the cytoplasm. Acts as a mediator between the cap-binding complex (CBC) and the primary microRNAs (miRNAs) processing machinery during cell proliferation. Contributes to the stability and delivery of capped primary miRNA transcripts to the primary miRNA processing complex, thereby playing a role in RNA-mediated gene silencing (RNAi) by miRNAs. The sequence is that of Serrate RNA effector molecule homolog A (srrt-a) from Xenopus laevis (African clawed frog).